Reading from the N-terminus, the 348-residue chain is Aspartate carbamoyltransferase catalytic subunit (348 aa).

2 residues coordinate carbamoyl phosphate: arginine 59 and threonine 60. Residue lysine 87 coordinates L-aspartate. Arginine 109, histidine 142, and glutamine 145 together coordinate carbamoyl phosphate. Positions 182 and 253 each coordinate L-aspartate. Residues glycine 294 and proline 295 each coordinate carbamoyl phosphate.

This sequence belongs to the aspartate/ornithine carbamoyltransferase superfamily. ATCase family. In terms of assembly, heterododecamer (2C3:3R2) of six catalytic PyrB chains organized as two trimers (C3), and six regulatory PyrI chains organized as three dimers (R2).

The enzyme catalyses carbamoyl phosphate + L-aspartate = N-carbamoyl-L-aspartate + phosphate + H(+). The protein operates within pyrimidine metabolism; UMP biosynthesis via de novo pathway; (S)-dihydroorotate from bicarbonate: step 2/3. In terms of biological role, catalyzes the condensation of carbamoyl phosphate and aspartate to form carbamoyl aspartate and inorganic phosphate, the committed step in the de novo pyrimidine nucleotide biosynthesis pathway. This Prochlorococcus marinus (strain MIT 9303) protein is Aspartate carbamoyltransferase catalytic subunit.